Reading from the N-terminus, the 299-residue chain is Ribosomal RNA small subunit methyltransferase H (299 aa).

S-adenosyl-L-methionine is bound by residues 45–47, D64, F92, D108, and Q115; that span reads GGH. Residues 275–299 are disordered; sequence PQSDEQAKNPRSRSAKLRLAQRKEQ. Residues 284 to 299 are compositionally biased toward basic residues; sequence PRSRSAKLRLAQRKEQ.

This sequence belongs to the methyltransferase superfamily. RsmH family.

The protein localises to the cytoplasm. The catalysed reaction is cytidine(1402) in 16S rRNA + S-adenosyl-L-methionine = N(4)-methylcytidine(1402) in 16S rRNA + S-adenosyl-L-homocysteine + H(+). Specifically methylates the N4 position of cytidine in position 1402 (C1402) of 16S rRNA. This Gloeothece citriformis (strain PCC 7424) (Cyanothece sp. (strain PCC 7424)) protein is Ribosomal RNA small subunit methyltransferase H.